The primary structure comprises 287 residues: Aspartate dehydrogenase domain-containing protein (287 aa).

2 positions are modified to phosphoserine: Ser-24 and Ser-172.

The protein belongs to the L-aspartate dehydrogenase family.

The sequence is that of Aspartate dehydrogenase domain-containing protein from Mus musculus (Mouse).